The primary structure comprises 42 residues: Fungal defensin eurocin (42 aa).

The beta-D-GlcNAc-(1-&gt;4)-Mur2Ac(oyl-L-Ala-gamma-D-Glu-L-Lys-D-Ala-D-Ala)-di-trans,octa-cis-undecaprenyl diphosphate site is built by F2, G3, C4, and H14. Cystine bridges form between C4/C27, C11/C38, and C15/C40. Residues 31 to 35 (WYLGH) form an interaction site with membranes lipids region. C38 provides a ligand contact to beta-D-GlcNAc-(1-&gt;4)-Mur2Ac(oyl-L-Ala-gamma-D-Glu-L-Lys-D-Ala-D-Ala)-di-trans,octa-cis-undecaprenyl diphosphate.

The protein belongs to the invertebrate defensin family.

It localises to the secreted. Its subcellular location is the target cell membrane. Functionally, antimicrobial peptide that acts against Gram-positive bacteria but not against Gram-negative bacteria. It selectively inhibits peptidoglycan biosynthesis through complex formation with the cell wall precursor lipid II (1:1 molar ratio) thus inhibiting cell wall synthesis. It does not disrupt cell membranes. In vivo, is effective against an intraperitoneal infection with S.pneumoniae. In vitro, it shows very low hemolytic and cytolytic activities. This is Fungal defensin eurocin from Aspergillus amstelodami.